The chain runs to 332 residues: Glycerol-3-phosphate dehydrogenase [NAD(P)+] (332 aa).

Positions 15, 35, and 108 each coordinate NADPH. The sn-glycerol 3-phosphate site is built by lysine 108, glycine 137, and serine 139. Alanine 141 contacts NADPH. The sn-glycerol 3-phosphate site is built by lysine 192, aspartate 245, serine 255, arginine 256, and asparagine 257. The active-site Proton acceptor is the lysine 192. Arginine 256 is a binding site for NADPH. The NADPH site is built by leucine 278 and glutamate 280.

It belongs to the NAD-dependent glycerol-3-phosphate dehydrogenase family.

The protein resides in the cytoplasm. The enzyme catalyses sn-glycerol 3-phosphate + NAD(+) = dihydroxyacetone phosphate + NADH + H(+). It carries out the reaction sn-glycerol 3-phosphate + NADP(+) = dihydroxyacetone phosphate + NADPH + H(+). Its pathway is membrane lipid metabolism; glycerophospholipid metabolism. In terms of biological role, catalyzes the reduction of the glycolytic intermediate dihydroxyacetone phosphate (DHAP) to sn-glycerol 3-phosphate (G3P), the key precursor for phospholipid synthesis. This is Glycerol-3-phosphate dehydrogenase [NAD(P)+] from Methylobacterium radiotolerans (strain ATCC 27329 / DSM 1819 / JCM 2831 / NBRC 15690 / NCIMB 10815 / 0-1).